The chain runs to 184 residues: MSRIANKPIVIPNGVEVKVENNVFKVKGPKGELSQEFLPYIKIEVNENEIYVKPNLEFMKRKSDLKKMKMFTGTYWRLFNNMIIGVTQGFRKELEIIGIGYRAQLQGKKLVMNLGYAHPVEMEIPSDVAVEVPSPNRIVVSGIDKQRVGQVAADIRRWREPNVYSGKGIRYVGEVVRLKEGKKA.

Belongs to the universal ribosomal protein uL6 family. Part of the 50S ribosomal subunit.

Its function is as follows. This protein binds to the 23S rRNA, and is important in its secondary structure. It is located near the subunit interface in the base of the L7/L12 stalk, and near the tRNA binding site of the peptidyltransferase center. The sequence is that of Large ribosomal subunit protein uL6 from Thermosipho melanesiensis (strain DSM 12029 / CIP 104789 / BI429).